Reading from the N-terminus, the 308-residue chain is ATP synthase gamma chain (308 aa).

This sequence belongs to the ATPase gamma chain family. F-type ATPases have 2 components, CF(1) - the catalytic core - and CF(0) - the membrane proton channel. CF(1) has five subunits: alpha(3), beta(3), gamma(1), delta(1), epsilon(1). CF(0) has three main subunits: a, b and c.

It localises to the cell membrane. Its function is as follows. Produces ATP from ADP in the presence of a proton gradient across the membrane. The gamma chain is believed to be important in regulating ATPase activity and the flow of protons through the CF(0) complex. This chain is ATP synthase gamma chain, found in Lacticaseibacillus casei (strain BL23) (Lactobacillus casei).